A 531-amino-acid polypeptide reads, in one-letter code: Acyl-CoA ligase azaF (531 aa).

188-199 (RLFSSGTTGLPK) contributes to the AMP binding site. An AMP-binding region spans residues 449 to 525 (EVEGVLRNHP…DAIPRNASGK (77 aa)).

It belongs to the ATP-dependent AMP-binding enzyme family.

It participates in secondary metabolite biosynthesis. Functionally, acyl-CoA ligase; part of the gene cluster that mediates the biosynthesis of azaphilones, a class of fungal metabolites characterized by a highly oxygenated pyrano-quinone bicyclic core and exhibiting a broad range of bioactivities. In the first step, the non-reducing polyketide synthase azaA forms the hexaketide precursor from successive condensations of five malonyl-CoA units, presumably with a simple acetyl-CoA starter unit. The reactive polyketide chain then undergoes a PT-mediated C2-C7 cyclization to afford the aromatic ring and is eventually released as an aldehyde through the R-domain. The putative ketoreductase azaE is proposed to catalyze the reduction of the terminal ketone resulting in the early culture product FK17-P2a. The monooxygenase azaH was demonstrated to be the only enzyme required to convert FK17-P2a to azanigerone E. AzaH first hydroxylates the benzaldehyde intermediate FK17-P2a at C4, which triggers the formation of the pyran-ring to afford azanigerone E. In parallel, the 2,4-dimethylhexanoyl chain is synthesized by the HR-PKS azaB and is proposed to be transferred to the C4-hydroxyl of azanigerone E by the acyltransferase azaD directly from the ACP domain of azaB. Alternatively, the 2,4-dimethyl-hexanoyl chain may be offloaded from the HR-PKS as a carboxylic acid and converted to an acyl-CoA by azaF. The resulting acyl-CoA molecule could then be taken up as a substrate by AzaD to form azanigerone B. To yield the carboxylic acid substituent in azanigerone A, the hydroxypropyl side chain of azanigerone B would need to undergo a C-C oxidative cleavage catalyzed by cytochrome P450 AzaI. AzaI is proposed to act on a vicinal diol that leads to a C-C bond scission either through an alkoxyradical intermediate or a peroxy complex. In the biosynthesis of azanigerone A, azanigerone B first undergoes hydroxylation at C10, possibly catalyzed by one of the two FAD-dependent monooxygenases encoded in the cluster, azaG or azaL, resulting in the vicinal diol azanigerone C. Oxidative cleavage of azanigerone C by azaI would yield the corresponding aldehyde derivative of azanigerone A. Finally, the dehydrogenase azaJ is proposed to convert the aldehyde functional group into the carboxylic acid, completing the conversion from azanigerone B to azanigerone A. Alternatively, the oxidation of aldehyde to carboxylic acid may be catalyzed by the same P450 enzyme azaI via consecutive oxidation or by endogenous alcohol dehydrogenase. This chain is Acyl-CoA ligase azaF, found in Aspergillus niger (strain ATCC 1015 / CBS 113.46 / FGSC A1144 / LSHB Ac4 / NCTC 3858a / NRRL 328 / USDA 3528.7).